We begin with the raw amino-acid sequence, 795 residues long: Delta-1-pyrroline-5-carboxylate synthase (795 aa).

Residues 1-361 (MLRHMHRSGV…FFSEVKPAGP (361 aa)) are glutamate 5-kinase. Substrate-binding residues include Ser-117, Asp-223, and Asn-246. ATP-binding positions include 266 to 267 (SD) and 305 to 311 (LGGMEAK). N6-succinyllysine is present on residues Lys-311, Lys-347, and Lys-550. The gamma-glutamyl phosphate reductase stretch occupies residues 362–795 (TVEQQGEMAR…NLPVPQRNFS (434 aa)).

The protein in the N-terminal section; belongs to the glutamate 5-kinase family. This sequence in the C-terminal section; belongs to the gamma-glutamyl phosphate reductase family. As to quaternary structure, can form homodimers/multimers.

It is found in the mitochondrion matrix. The enzyme catalyses L-glutamate + ATP = L-glutamyl 5-phosphate + ADP. It carries out the reaction L-glutamate 5-semialdehyde + phosphate + NADP(+) = L-glutamyl 5-phosphate + NADPH + H(+). It participates in amino-acid biosynthesis; L-proline biosynthesis; L-glutamate 5-semialdehyde from L-glutamate: step 1/2. The protein operates within amino-acid biosynthesis; L-proline biosynthesis; L-glutamate 5-semialdehyde from L-glutamate: step 2/2. Isoform Short: Inhibited by L-ornithine with a Ki of approximately 0.25 mm. Isoform Long: Insensitive to ornithine inhibition. Thus, the two amino acid insert in the long isoform abolishes feedback inhibition of P5CS activity by L-ornithine. Functionally, bifunctional enzyme that converts glutamate to glutamate 5-semialdehyde, an intermediate in the biosynthesis of proline, ornithine and arginine. This Mus musculus (Mouse) protein is Delta-1-pyrroline-5-carboxylate synthase (Aldh18a1).